Consider the following 991-residue polypeptide: Ribonuclease TUDOR 1 (991 aa).

At A2 the chain carries N-acetylalanine. TNase-like domains lie at 8 to 151, 186 to 364, 378 to 557, and 587 to 714; these read QWLK…RWSK, KPME…MWAN, QNFT…IHSA, and RRIP…IWEN. Positions 227–250 are disordered; that stretch reads RTTNGSVVETVPDEPNGDVSAESR. The Tudor domain occupies 782 to 847; the sequence is NPKRGDIVLA…RPIDPSVSAA (66 aa). Y970 bears the Phosphotyrosine mark. Positions 971–991 are disordered; the sequence is GDIESDDEDTGPARKPAGGRR. A Phosphoserine modification is found at S975. The residue at position 980 (T980) is a Phosphothreonine.

In terms of tissue distribution, expressed in seeds, leaves, flowers, roots and siliques (at protein level). Accumulates in the cap and elongation zone of the root apices (at protein level).

The protein localises to the cytoplasm. The protein resides in the cytoplasmic granule. Its subcellular location is the perinuclear region. It is found in the endoplasmic reticulum. With respect to regulation, repressed by the specific inhibitor 3',5'-deoxythymidine bisphosphate (pdTp); this RNase activity inhibition impairs subcellular relocation upon abiotic stress and leads to reduced stress resistance. In terms of biological role, cytoprotective ribonuclease (RNase) required for resistance to abiotic stresses, acting as a positive regulator of mRNA decapping during stress. Essential for the integrity and function of cytoplasmic messenger ribonucleoprotein (mRNP) complexes called stress granules (SGs) and processing bodies (PBs), sites of post-transcriptional gene regulation during stress (e.g. salt and heat). Involved in gibberellic acid (GA) biosynthesis. Essential for stress tolerance, probably by regulating mRNAs entering the secretory pathway. Component of stress granules (SGs) that regulates growth under salt stress by modulating levels of GA20OX3 mRNA. Binds GA20OX3 mRNA. May inhibit the degradation of mRNAs involved in stress adaptation. The polypeptide is Ribonuclease TUDOR 1 (Arabidopsis thaliana (Mouse-ear cress)).